The following is a 370-amino-acid chain: Allatostatins (370 aa).

The first 27 residues, 1 to 27 (MSGPRTCFCLPSALVLVLLSLSTSALG), serve as a signal peptide directing secretion. Residues 28–65 (TAPEPSGVHEESPAGGGTDLLPHPEDLSASDNPDLEFV) constitute a propeptide that is removed on maturation. Residues 29 to 58 (APEPSGVHEESPAGGGTDLLPHPEDLSASD) are disordered. Leucine amide occurs at positions 73, 94, 105, and 117. A propeptide spanning residues 121 to 151 (DYDYYGEEDEDDQQAIGDEDIEESDVGDLMD) is cleaved from the precursor. Leu-161, Leu-172, Leu-188, Leu-200, Leu-213, and Leu-232 each carry leucine amide. The propeptide occupies 236-251 (SDDIDFRELEEKFAED). Position 264 is a leucine amide (Leu-264). The propeptide occupies 268 to 345 (EVEPSELEAV…ITPEEFSRMV (78 aa)). A disordered region spans residues 273-298 (ELEAVRNEEKDNSSVHDKKNNTNDMH). Leucine amide is present on Leu-353. Position 364 is an isoleucine amide (Ile-364). Residues 368-370 (SER) constitute a propeptide that is removed on maturation.

It belongs to the allatostatin family. As to expression, brain, subesophageal ganglion and corpus allatum.

The protein localises to the secreted. Functionally, neuropeptide inhibitors of juvenile hormone synthesis and gut muscle contraction. This is Allatostatins from Diploptera punctata (Pacific beetle cockroach).